The sequence spans 256 residues: MTERLKLTGLVLRAVDYGESDRVVTLLTRERGKVSGFARGARASRRRFGGALEPFTLLVAEARERPGSDMLGLESVSVLRAHGGIRGELARIACAGYAAELSRELVRDHEPHAELLALLLEYLGALDAGPARPEGLRAFELGALRAAGLMPRVDACVACGGALGPEGRVRFDPGQGGVLCPPCAPAAAPGAPWVSIAAASALARLQAEGLAGASAALPPSVGREARDALAAFLEHHLGRRLAARRFLDEVGPLLGD.

This sequence belongs to the RecO family.

Its function is as follows. Involved in DNA repair and RecF pathway recombination. The polypeptide is DNA repair protein RecO (Anaeromyxobacter sp. (strain Fw109-5)).